A 266-amino-acid polypeptide reads, in one-letter code: Undecaprenyl-diphosphatase (266 aa).

Transmembrane regions (helical) follow at residues 1 to 21, 39 to 59, 87 to 107, 115 to 135, 144 to 164, 183 to 203, 218 to 238, and 246 to 266; these read MDTF…FLPI, QGLS…VMYF, WWII…KDFI, AVIA…DRMF, VGWK…IPGT, AAAR…AILV, ALSL…HLFL, and MTPF…FMFA.

Belongs to the UppP family.

It is found in the cell inner membrane. It carries out the reaction di-trans,octa-cis-undecaprenyl diphosphate + H2O = di-trans,octa-cis-undecaprenyl phosphate + phosphate + H(+). Its function is as follows. Catalyzes the dephosphorylation of undecaprenyl diphosphate (UPP). Confers resistance to bacitracin. This chain is Undecaprenyl-diphosphatase, found in Shewanella sediminis (strain HAW-EB3).